The following is a 185-amino-acid chain: Large ribosomal subunit protein uL5 (185 aa).

Belongs to the universal ribosomal protein uL5 family. In terms of assembly, part of the 50S ribosomal subunit; part of the 5S rRNA/L5/L18/L25 subcomplex. Contacts the 5S rRNA and the P site tRNA. Forms a bridge to the 30S subunit in the 70S ribosome.

In terms of biological role, this is one of the proteins that bind and probably mediate the attachment of the 5S RNA into the large ribosomal subunit, where it forms part of the central protuberance. In the 70S ribosome it contacts protein S13 of the 30S subunit (bridge B1b), connecting the 2 subunits; this bridge is implicated in subunit movement. Contacts the P site tRNA; the 5S rRNA and some of its associated proteins might help stabilize positioning of ribosome-bound tRNAs. This Sinorhizobium medicae (strain WSM419) (Ensifer medicae) protein is Large ribosomal subunit protein uL5.